Consider the following 71-residue polypeptide: Phenoloxidase 3 (71 aa).

Cu cation is bound by residues H3 and H29.

It belongs to the tyrosinase family. Cu(2+) is required as a cofactor. Post-translationally, upon activation, a trypsin type protease cleaves prophenol oxidase to yield the active enzyme. Hemocytes and plasma.

The protein localises to the secreted. The catalysed reaction is 2 L-dopa + O2 = 2 L-dopaquinone + 2 H2O. It carries out the reaction L-tyrosine + O2 = L-dopaquinone + H2O. Its function is as follows. This is a copper-containing oxidase that functions in the formation of pigments such as melanins and other polyphenolic compounds. Catalyzes the rate-limiting conversions of tyrosine to DOPA, DOPA to DOPA-quinone and possibly 5,6 dihydroxyindole to indole-5'6 quinone. This chain is Phenoloxidase 3, found in Sarcophaga argyrostoma (Flesh fly).